Consider the following 310-residue polypeptide: 26S proteasome non-ATPase regulatory subunit 14 (310 aa).

The 136-residue stretch at 31 to 166 (VYISSLALLK…IDAFRLINAN (136 aa)) folds into the MPN domain. Zn(2+)-binding residues include His113, His115, and Asp126. The short motif at 113-126 (HSHPGFGCWLSGVD) is the JAMM motif element. Ser150 and Ser224 each carry phosphoserine. At Thr266 the chain carries Phosphothreonine.

It belongs to the peptidase M67A family. PSMD14 subfamily. As to quaternary structure, component of the 19S proteasome regulatory particle complex. The 26S proteasome consists of a 20S core particle (CP) and two 19S regulatory subunits (RP). The regulatory particle is made of a lid composed of 9 subunits including PSMD4, a base containing 6 ATPases and few additional components. Within the complex, PSMD4 interacts with subunit PSMD7 through their respective MPN domain. Interacts with TXNL1. As to expression, widely expressed. Highest levels in heart and skeletal muscle.

Functionally, component of the 26S proteasome, a multiprotein complex involved in the ATP-dependent degradation of ubiquitinated proteins. This complex plays a key role in the maintenance of protein homeostasis by removing misfolded or damaged proteins, which could impair cellular functions, and by removing proteins whose functions are no longer required. Therefore, the proteasome participates in numerous cellular processes, including cell cycle progression, apoptosis, or DNA damage repair. The PSMD14 subunit is a metalloprotease that specifically cleaves 'Lys-63'-linked polyubiquitin chains within the complex. Plays a role in response to double-strand breaks (DSBs): acts as a regulator of non-homologous end joining (NHEJ) by cleaving 'Lys-63'-linked polyubiquitin, thereby promoting retention of JMJD2A/KDM4A on chromatin and restricting TP53BP1 accumulation. Also involved in homologous recombination repair by promoting RAD51 loading. This is 26S proteasome non-ATPase regulatory subunit 14 (PSMD14) from Homo sapiens (Human).